Reading from the N-terminus, the 136-residue chain is Large ribosomal subunit protein uL22 (136 aa).

Belongs to the universal ribosomal protein uL22 family. As to quaternary structure, part of the 50S ribosomal subunit.

Functionally, this protein binds specifically to 23S rRNA; its binding is stimulated by other ribosomal proteins, e.g. L4, L17, and L20. It is important during the early stages of 50S assembly. It makes multiple contacts with different domains of the 23S rRNA in the assembled 50S subunit and ribosome. In terms of biological role, the globular domain of the protein is located near the polypeptide exit tunnel on the outside of the subunit, while an extended beta-hairpin is found that lines the wall of the exit tunnel in the center of the 70S ribosome. The chain is Large ribosomal subunit protein uL22 from Leifsonia xyli subsp. xyli (strain CTCB07).